Consider the following 425-residue polypeptide: Acyl-lipid (8-3)-desaturase (425 aa).

The tract at residues 1–25 (MPPRDSYSYAAPPSAQLHEVDTPQE) is disordered. In terms of domain architecture, Cytochrome b5 heme-binding spans 18–93 (HEVDTPQEHD…SRPVHKGYSP (76 aa)). Heme contacts are provided by His-47 and His-69. The chain crosses the membrane as a helical span at residues 134 to 154 (VAGAALIWHGYTFAGIAMLGV). The Histidine box-1 signature appears at 164 to 168 (HEGGH). A helical transmembrane segment spans residues 175 to 197 (IAFDRAIQVACYGLGCGMSGAWW). Positions 201-206 (HNKHHA) match the Histidine box-2 motif. The next 2 helical transmembrane spans lie at 241–261 (WLSMQAKLFAPVTTLLVALGW) and 297–317 (GAGYVLACYLLYVQLGAMYIF). The Histidine box-3 motif lies at 365 to 369 (QIEHH).

This sequence belongs to the fatty acid desaturase type 1 family. Fe(2+) serves as cofactor.

It is found in the membrane. It carries out the reaction an (8Z,11Z,14Z)-icosatrienoyl-containing glycerolipid + 2 Fe(II)-[cytochrome b5] + O2 + 2 H(+) = (5Z,8Z,11Z,14Z)-eicosatetraenoyl-containing glycerolipid + 2 Fe(III)-[cytochrome b5] + 2 H2O. The enzyme catalyses an (8Z,11Z,14Z,17Z)-eicosatetraenoyl-containing glycerolipid + 2 Fe(II)-[cytochrome b5] + O2 + 2 H(+) = a (5Z,8Z,11Z,14Z,17Z)-eicosapentaenoyl-containing glycerolipid + 2 Fe(III)-[cytochrome b5] + 2 H2O. Its function is as follows. Fatty acid desaturase that introduces a cis double bond at the 5-position in 20-carbon polyunsaturated fatty acids incorporated in a glycerolipid that contain a Delta(8) double bond. In Rebecca salina (Marine microalga), this protein is Acyl-lipid (8-3)-desaturase.